Here is a 321-residue protein sequence, read N- to C-terminus: Annexin A5 (321 aa).

Annexin repeat units follow at residues 15-86, 87-158, 170-242, and 246-317; these read FDAR…SLMR, PARI…VLLQ, ALVE…AVVK, and SVPA…LLCG.

Belongs to the annexin family.

Its function is as follows. Collagen-binding protein. The sequence is that of Annexin A5 (ANXA5) from Gallus gallus (Chicken).